Here is a 207-residue protein sequence, read N- to C-terminus: SPRY domain-containing protein 4 (207 aa).

A B30.2/SPRY domain is found at 12–206 (CRWGAKRLGV…THSGLEVPEG (195 aa)). N6-acetyllysine occurs at positions 53 and 130. Lysine 139 bears the N6-succinyllysine mark.

This chain is SPRY domain-containing protein 4 (SPRYD4), found in Homo sapiens (Human).